A 224-amino-acid polypeptide reads, in one-letter code: UPF0758 protein PFL_6051 (224 aa).

The region spanning 102 to 224 (ALENPLVVRD…PLSMAEYGWI (123 aa)) is the MPN domain. Residues H173, H175, and D186 each coordinate Zn(2+). A JAMM motif motif is present at residues 173–186 (HNHPSGICEPSPAD).

The protein belongs to the UPF0758 family.

The polypeptide is UPF0758 protein PFL_6051 (Pseudomonas fluorescens (strain ATCC BAA-477 / NRRL B-23932 / Pf-5)).